The chain runs to 552 residues: Glutamate--tRNA ligase (552 aa).

Residues 102-112 (PNPSGPLHIGH) carry the 'HIGH' region motif.

The protein belongs to the class-I aminoacyl-tRNA synthetase family. Glutamate--tRNA ligase type 2 subfamily.

It localises to the cytoplasm. The enzyme catalyses tRNA(Glu) + L-glutamate + ATP = L-glutamyl-tRNA(Glu) + AMP + diphosphate. Catalyzes the attachment of glutamate to tRNA(Glu) in a two-step reaction: glutamate is first activated by ATP to form Glu-AMP and then transferred to the acceptor end of tRNA(Glu). This chain is Glutamate--tRNA ligase, found in Methanothermobacter marburgensis (strain ATCC BAA-927 / DSM 2133 / JCM 14651 / NBRC 100331 / OCM 82 / Marburg) (Methanobacterium thermoautotrophicum).